Reading from the N-terminus, the 406-residue chain is Acetate kinase (406 aa).

A Mg(2+)-binding site is contributed by Asn7. Lys14 is a binding site for ATP. Arg90 contacts substrate. Catalysis depends on Asp147, which acts as the Proton donor/acceptor. ATP is bound by residues 207–211 (HLGNG), 283–285 (DMR), and 331–335 (GVGEN). Glu385 lines the Mg(2+) pocket.

Belongs to the acetokinase family. In terms of assembly, homodimer. It depends on Mg(2+) as a cofactor. Mn(2+) serves as cofactor.

It localises to the cytoplasm. It catalyses the reaction acetate + ATP = acetyl phosphate + ADP. It functions in the pathway metabolic intermediate biosynthesis; acetyl-CoA biosynthesis; acetyl-CoA from acetate: step 1/2. Its function is as follows. Catalyzes the formation of acetyl phosphate from acetate and ATP. Can also catalyze the reverse reaction. This is Acetate kinase from Fervidobacterium nodosum (strain ATCC 35602 / DSM 5306 / Rt17-B1).